The sequence spans 295 residues: Probable palmitoyltransferase ZDHHC24 (295 aa).

The Cytoplasmic segment spans residues 1–20 (MTSFMSRVWCKVESTGRQLP). Residues 21 to 41 (IVLNAVLVFSITAEVSYLVLV) form a helical membrane-spanning segment. At 42–60 (EAPFEPEQKKTDWSTIWTG) the chain is on the extracellular side. The helical transmembrane segment at 61-81 (LHLFAQYFMLGNITWNASLFV) threads the bilayer. Over 82–151 (KTNPSIRGVF…HNYRYFLTCL (70 aa)) the chain is Cytoplasmic. In terms of domain architecture, DHHC spans 102 to 152 (RYCYNCETHTPPRCSHCYDCNVCVLRRDHHCVFFGQCVGFHNYRYFLTCLL). The S-palmitoyl cysteine intermediate role is filled by Cys132. Residues 152–172 (LFMWAGLLYAVVMNAEVFIFI) form a helical membrane-spanning segment. Residues 173–176 (LKEG) lie on the Extracellular side of the membrane. A helical transmembrane segment spans residues 177–197 (VTFHSVMLLLVPWIMLVSGQV). Over 198–203 (TTRAFA) the chain is Cytoplasmic. The helical transmembrane segment at 204-224 (FAFIADTCVVGFLLVAAFLFF) threads the bilayer. At 225–295 (HVALMLRGQT…SLEPKKQAVH (71 aa)) the chain is on the extracellular side.

It belongs to the DHHC palmitoyltransferase family.

It localises to the membrane. The catalysed reaction is L-cysteinyl-[protein] + hexadecanoyl-CoA = S-hexadecanoyl-L-cysteinyl-[protein] + CoA. Functionally, probable palmitoyltransferase that could catalyze the addition of palmitate onto various protein substrates. This Danio rerio (Zebrafish) protein is Probable palmitoyltransferase ZDHHC24.